Reading from the N-terminus, the 473-residue chain is MTSLPGRGVSPSSSDPLCEGNAAPSSSSSGQDLKQSKNSILSCVFSSPFSIFEAHQDSSAHRPLKPHSGSYAWSRFLRRIACTGSMWRFLGASKALTSSDVWFLGKCYKLSSEELSNSSDCESGNAAFLEDFSSRIWITYRKGFDAISDSKYTSDVNWGCMVRSSQMLVAQALIFHHLGRSWRKPSQKPYSPEYIGILHMFGDSEACAFSIHNLLQAGKSYGLAAGSWVGPYAMCRAWQTLVRTNREHHEAVDGNGNFPMALYVVSGDEDGERGGAPVVCIDVAAQLCCDFNKGQSTWSPILLLVPLVLGLDKLNPRYIPLLKETFTFPQSLGILGGKPGTSTYVAGVQDDRVLYLDPHEVQLAVDIAADNLEADTSSYHCSTVRDLALDLIDPSLAIGFYCRDKDDFDDFCSRASELVDKANGAPLFTVMQSVQPSKQMYNEESSSGDGMDIINVEGLDGSGETGEEEWQIL.

Residues Met1–Leu33 form a disordered region. Cys160 (nucleophile) is an active-site residue. Active-site residues include Asp357 and His359.

Belongs to the peptidase C54 family. As to quaternary structure, interacts with ATG8.

The protein resides in the cytoplasm. The enzyme catalyses [protein]-C-terminal L-amino acid-glycyl-phosphatidylethanolamide + H2O = [protein]-C-terminal L-amino acid-glycine + a 1,2-diacyl-sn-glycero-3-phosphoethanolamine. Its function is as follows. Cysteine protease that plays a key role in autophagy by mediating both proteolytic activation and delipidation of ATG8 family proteins. The protease activity is required for proteolytic activation of ATG8 family proteins: cleaves the C-terminal amino acid of ATG8 proteins to reveal a C-terminal glycine. Exposure of the glycine at the C-terminus is essential for ATG8 proteins conjugation to phosphatidylethanolamine (PE) and insertion to membranes, which is necessary for autophagy. In addition to the protease activity, also mediates delipidation of PE-conjugated ATG8 proteins. This chain is Cysteine protease ATG4A (ATG4A), found in Oryza sativa subsp. indica (Rice).